The sequence spans 147 residues: Hemoglobin subunit beta (147 aa).

Residues 3–147 (NWTKTEKATI…VMSALGKQYH (145 aa)) enclose the Globin domain. The heme b site is built by His-64 and His-93.

This sequence belongs to the globin family. As to quaternary structure, heterotetramer of two alpha chains and two beta chains. In terms of tissue distribution, red blood cells.

Involved in oxygen transport from gills to the various peripheral tissues. The protein is Hemoglobin subunit beta (hbb) of Gymnodraco acuticeps (Antarctic dragonfish).